A 431-amino-acid chain; its full sequence is UDP-N-acetylmuramate--L-alanine ligase (431 aa).

108–114 (GSHGKTS) lines the ATP pocket.

This sequence belongs to the MurCDEF family.

It is found in the cytoplasm. The enzyme catalyses UDP-N-acetyl-alpha-D-muramate + L-alanine + ATP = UDP-N-acetyl-alpha-D-muramoyl-L-alanine + ADP + phosphate + H(+). The protein operates within cell wall biogenesis; peptidoglycan biosynthesis. Cell wall formation. In Macrococcus caseolyticus (strain JCSC5402) (Macrococcoides caseolyticum), this protein is UDP-N-acetylmuramate--L-alanine ligase.